Here is a 150-residue protein sequence, read N- to C-terminus: Large ribosomal subunit protein uL13 (150 aa).

Belongs to the universal ribosomal protein uL13 family. In terms of assembly, part of the 50S ribosomal subunit.

In terms of biological role, this protein is one of the early assembly proteins of the 50S ribosomal subunit, although it is not seen to bind rRNA by itself. It is important during the early stages of 50S assembly. The protein is Large ribosomal subunit protein uL13 of Chlamydia trachomatis serovar A (strain ATCC VR-571B / DSM 19440 / HAR-13).